A 720-amino-acid chain; its full sequence is Photosystem I P700 chlorophyll a apoprotein A1 (720 aa).

The next 8 membrane-spanning stretches (helical) occupy residues 61-84, 147-170, 186-210, 282-300, 337-360, 376-402, 424-446, and 522-540; these read VFSA…FHGA, LYCT…FHYH, LNHH…HVSL, TAHH…GHMY, WHAQ…HHMY, LSLF…IFMV, AIVS…LYIH, and FLVH…LILL. 2 residues coordinate [4Fe-4S] cluster: C564 and C573. Transmembrane regions (helical) follow at residues 580-601 and 655-677; these read HVFL…HFSW and LSAY…MFLF. Position 666 (H666) interacts with chlorophyll a'. Residues M674 and Y682 each coordinate chlorophyll a. W683 is a phylloquinone binding site. A helical membrane pass occupies residues 715–720; the sequence is AVGVAH.

It belongs to the PsaA/PsaB family. In terms of assembly, the PsaA/B heterodimer binds the P700 chlorophyll special pair and subsequent electron acceptors. PSI consists of a core antenna complex that captures photons, and an electron transfer chain that converts photonic excitation into a charge separation. The eukaryotic PSI reaction center is composed of at least 11 subunits. It depends on P700 is a chlorophyll a/chlorophyll a' dimer, A0 is one or more chlorophyll a, A1 is one or both phylloquinones and FX is a shared 4Fe-4S iron-sulfur center. as a cofactor.

It is found in the plastid. The protein resides in the chloroplast thylakoid membrane. It catalyses the reaction reduced [plastocyanin] + hnu + oxidized [2Fe-2S]-[ferredoxin] = oxidized [plastocyanin] + reduced [2Fe-2S]-[ferredoxin]. PsaA and PsaB bind P700, the primary electron donor of photosystem I (PSI), as well as the electron acceptors A0, A1 and FX. PSI is a plastocyanin-ferredoxin oxidoreductase, converting photonic excitation into a charge separation, which transfers an electron from the donor P700 chlorophyll pair to the spectroscopically characterized acceptors A0, A1, FX, FA and FB in turn. Oxidized P700 is reduced on the lumenal side of the thylakoid membrane by plastocyanin. This is Photosystem I P700 chlorophyll a apoprotein A1 from Sequoia sempervirens (California redwood).